A 959-amino-acid polypeptide reads, in one-letter code: MTTPTRATLEKALKSDQKLVNSATQIAKDLTAKAYDISALAEALGFALSSPDMEERVAGTNLLSAVLIALPQDLLQERQLEFLSTFYMDRLRDHHNVMPAIIDGIDALVHMKALPRAQIPQILQSFFEHTTCQSQTRSDRTKLFHIFQYLTENFQDELQAMAGDFVYGLINSIDGERDPRNLDIIFSFMPEFLSTYPLLHLAEEMFEIFACYFPIDFNPSKQDPAAITRDELSKKLTNCLVANNEFAEGTVVLAIEKLESELLVAKLDSIELLHQAAVKFPPSVLEPHFDQIWQALKTETFPGNDNEEILKASLKALSALLERAAHIPDISHSYQSSILGVILPHLSDVNQRLFHPATGIALVCVSGDAPYAADKILNSFLLKLQAADASSEQRIKIYYIVSQVYKLSALRGSLQKLDTTIRESVQDDVIASLRLIEQEEFDAKKEDLELQKAALSVLNESAPLLNEKQRALIYKALVQLVSHPSIDIDFTTLTVSLGALQPVEVQSNFIDVCVRNFEIFSTFVKRKIYTNLLPLMPQIAFTQRILDLVMTQTFNDTTAEPVRLLALEALNKLLLLADQRFIVDVQQESNLLHKLIELGQKTEGLSMQSLEQIAGALSRITQQLPLSEQSAIVSEYLPGLNLSQSADLYITKGLLGYLHKDITLDDHFERLLTDLTQLSLNSDNEQLRVIAHHLLCSMVNKMESNPANLRKVKKITEQLKVAIKKGDVRAVEILAWVGKGLVVAGFDEAADVVGDLSDLLKHPSLSTAAALGFDIIAAEYPELDLPVVKFLYKQKLFHTIMGKMGSKLANYCVHHLKAFVYVLKATPQAVIKLNIEQLGPLLFKSLEEHNEAQSLCIALGICEKFVAQQDTYFQGHLAHLIPSCLELSKYKAQHTMQVRIAALQLLYDVTKYPTFVLLPHKVDVTLALAAALDDPKRLVRNTAVKARNAWYLVGAPSPN.

HEAT repeat units follow at residues 794-828, 832-871, 874-915, and 918-956; these read QKLF…ATPQ, KLNI…QQDT, QGHL…YPTF, and LPHK…VGAP.

It belongs to the MET18/MMS19 family. As to quaternary structure, component of the CIA complex. Interacts with Xpd and galla-2. Binds to microtubules. As to expression, expressed in embryos (at protein level).

The protein resides in the cytoplasm. The protein localises to the cytoskeleton. It localises to the spindle. It is found in the nucleus. Its subcellular location is the midbody. Key component of the cytosolic iron-sulfur protein assembly (CIA) complex, a multiprotein complex that mediates the incorporation of iron-sulfur cluster into apoproteins specifically involved in DNA metabolism and genomic integrity. In the CIA complex, MMS19 acts as an adapter between early-acting CIA components and a subset of cellular target iron-sulfur proteins. Essential for diploid cell cycles, organ growth and development. Regulates mitosis by binding to Xpd and thereby competing with the Xpd-mediated repression on the Cdk-activating kinase (CAK) complex. Regulates the centrosomal localization of the MT regulator tacc, a downstream target of aurA kinase. Binds to microtubules (MT). Regulates spindle and astral MT growth, MT stability and bundling. In neuroblasts, necessary for timely and coordinated spindle assembly and orientation which is necessary for mitotic progression. In young embryos, the maternal protein is important for progression through mitosis. This chain is MMS19 nucleotide excision repair protein, found in Drosophila melanogaster (Fruit fly).